The following is a 295-amino-acid chain: MSLKHFIQITKPGIIFGNVLSVAGGFFLASKGHVDLAVFLAAMIGTSLVVASGCVFNNCIDRDIDLKMERTKNRVLVQGLISLKLALVYATVLGVAGVALLYKVANPLAALFAVIGFIIYVGFYSLYLKRKSVHGTLVGSLSGAMPPVIGYVAVTNSFDMAALTLLVMFSLWQMPHSYAIAIFRFNDYLAASIPVLPVKRGIQVAKKHILIYILAFLVATLMLTFSGYAGMSYLAVAAAMGMYWLYMAWTGYKAVDDTVWARKLFVFSIFTITALSVMMSLDFKVPTELLLTYAP.

Transmembrane regions (helical) follow at residues I9–A29, L36–F56, L80–L100, L108–L128, G135–T155, L163–F183, I209–A229, G230–T250, and F265–V285.

This sequence belongs to the UbiA prenyltransferase family. Protoheme IX farnesyltransferase subfamily.

Its subcellular location is the cell inner membrane. The catalysed reaction is heme b + (2E,6E)-farnesyl diphosphate + H2O = Fe(II)-heme o + diphosphate. The protein operates within porphyrin-containing compound metabolism; heme O biosynthesis; heme O from protoheme: step 1/1. In terms of biological role, converts heme B (protoheme IX) to heme O by substitution of the vinyl group on carbon 2 of heme B porphyrin ring with a hydroxyethyl farnesyl side group. The polypeptide is Protoheme IX farnesyltransferase 2 (Pseudomonas fluorescens (strain Pf0-1)).